The primary structure comprises 312 residues: Ornithine carbamoyltransferase (312 aa).

Residues 60-63 (STRT), Gln87, Arg111, and 138-141 (HPCQ) each bind carbamoyl phosphate. L-ornithine-binding positions include Asn169, Asp229, and 233-234 (SM). Carbamoyl phosphate-binding positions include 268–269 (CL) and Arg296.

It belongs to the aspartate/ornithine carbamoyltransferase superfamily. OTCase family.

It is found in the cytoplasm. It carries out the reaction carbamoyl phosphate + L-ornithine = L-citrulline + phosphate + H(+). The protein operates within amino-acid biosynthesis; L-arginine biosynthesis; L-arginine from L-ornithine and carbamoyl phosphate: step 1/3. Reversibly catalyzes the transfer of the carbamoyl group from carbamoyl phosphate (CP) to the N(epsilon) atom of ornithine (ORN) to produce L-citrulline. This Rhodopseudomonas palustris (strain BisA53) protein is Ornithine carbamoyltransferase.